Reading from the N-terminus, the 459-residue chain is Type I restriction enzyme HindI specificity subunit (459 aa).

It belongs to the type-I restriction system S methylase family. The type I restriction/modification system is composed of three polypeptides R, M and S; the restriction enzyme has stoichiometry R(2)M(2)S(1) while the methyltransferase is M(2)S(1).

Its function is as follows. The specificity (S) subunit of a type I restriction enzyme; this subunit dictates DNA sequence specificity. The M and S subunits together form a methyltransferase (MTase) that methylates adenosines in the sequence 5'-RAACN(5)TAG-3'. Methylation protects against cleavage by HindI. In the presence of the R subunit the complex can also act as an endonuclease, binding to the same target sequence but cutting the DNA some distance from this site. Whether the DNA is cut or modified depends on the methylation state of the target sequence. When the target site is unmodified, the DNA is cut. When the target site is hemimethylated, the complex acts as a maintenance MTase modifying the DNA so that both strands become methylated. After locating a non-methylated recognition site, the enzyme complex serves as a molecular motor that translocates DNA in an ATP-dependent manner until a collision occurs that triggers cleavage. The chain is Type I restriction enzyme HindI specificity subunit from Haemophilus influenzae (strain ATCC 51907 / DSM 11121 / KW20 / Rd).